Reading from the N-terminus, the 181-residue chain is Ribulose bisphosphate carboxylase small subunit, chloroplastic 1 (181 aa).

Residues 1-57 constitute a chloroplast transit peptide; sequence MASSIVSSAAAATRSNVAQASMVAPFTGLKSAASFPVTKKNNNVDITSLASNGGRVR.

This sequence belongs to the RuBisCO small chain family. In terms of assembly, (Microbial infection) Binds to tobamovirus movement protein; this interaction seems required for viral systemic movement. Heterohexadecamer of 8 large and 8 small subunits.

It is found in the plastid. It localises to the chloroplast. Its subcellular location is the cell junction. The protein localises to the plasmodesma. Functionally, ruBisCO catalyzes two reactions: the carboxylation of D-ribulose 1,5-bisphosphate, the primary event in carbon dioxide fixation, as well as the oxidative fragmentation of the pentose substrate. Both reactions occur simultaneously and in competition at the same active site. Although the small subunit is not catalytic it is essential for maximal activity. Involved in antiviral defenses. This chain is Ribulose bisphosphate carboxylase small subunit, chloroplastic 1, found in Solanum lycopersicum (Tomato).